Consider the following 490-residue polypeptide: Kinetochore protein Nuf2 homolog (490 aa).

2 coiled-coil regions span residues 146 to 280 and 310 to 407; these read DRKF…KLEA and DLID…SETI. Disordered stretches follow at residues 346-365 and 468-490; these read QSETHEQLRIEHTQKSEERQ and IDAGENTENCDPQPNDSSFSVFK.

It belongs to the NUF2 family. Component of the NDC80 complex, which is composed of at least ndc-80 and him-10. The NDC80 complex interacts with knl-1.

Its subcellular location is the nucleus. The protein resides in the chromosome. It is found in the centromere. The protein localises to the kinetochore. Functionally, acts as a component of the essential kinetochore-associated NDC80 complex, which is required for chromosome segregation in mitosis and meiosis and spindle checkpoint activity. The ndc-80 complex synergistically enhances the affinity of the ska-1 complex for microtubules and may allow the ndc-80 complex to track depolymerizing microtubules. This Caenorhabditis elegans protein is Kinetochore protein Nuf2 homolog (him-10).